A 430-amino-acid chain; its full sequence is Histidine--tRNA ligase (430 aa).

Belongs to the class-II aminoacyl-tRNA synthetase family. Homodimer.

Its subcellular location is the cytoplasm. The catalysed reaction is tRNA(His) + L-histidine + ATP = L-histidyl-tRNA(His) + AMP + diphosphate + H(+). The chain is Histidine--tRNA ligase (hisS) from Chlamydia pneumoniae (Chlamydophila pneumoniae).